Consider the following 256-residue polypeptide: DNA repair protein RecO (256 aa).

The protein belongs to the RecO family.

In terms of biological role, involved in DNA repair and RecF pathway recombination. The polypeptide is DNA repair protein RecO (Streptococcus pneumoniae serotype 2 (strain D39 / NCTC 7466)).